A 135-amino-acid polypeptide reads, in one-letter code: Small ribosomal subunit protein uS17 (135 aa).

The disordered stretch occupies residues 1–59; it reads MAEAKTGAKAAPRVAKAAKAAPKKAAPNDAEAIGAANAANVKGPKHTPRTPKPRGRRKT. The segment covering 8-42 has biased composition (low complexity); the sequence is AKAAPRVAKAAKAAPKKAAPNDAEAIGAANAANVK. Basic residues predominate over residues 43 to 59; sequence GPKHTPRTPKPRGRRKT.

Belongs to the universal ribosomal protein uS17 family. Part of the 30S ribosomal subunit.

Functionally, one of the primary rRNA binding proteins, it binds specifically to the 5'-end of 16S ribosomal RNA. This is Small ribosomal subunit protein uS17 from Mycobacterium bovis (strain ATCC BAA-935 / AF2122/97).